The chain runs to 233 residues: Orotidine 5'-phosphate decarboxylase (233 aa).

Substrate contacts are provided by residues D11, K33, 60–69 (DLKFHDIPNT), T120, R181, Q190, G210, and R211. K62 (proton donor) is an active-site residue.

The protein belongs to the OMP decarboxylase family. Type 1 subfamily. As to quaternary structure, homodimer.

The catalysed reaction is orotidine 5'-phosphate + H(+) = UMP + CO2. It participates in pyrimidine metabolism; UMP biosynthesis via de novo pathway; UMP from orotate: step 2/2. In terms of biological role, catalyzes the decarboxylation of orotidine 5'-monophosphate (OMP) to uridine 5'-monophosphate (UMP). In Vibrio campbellii (strain ATCC BAA-1116), this protein is Orotidine 5'-phosphate decarboxylase.